A 535-amino-acid polypeptide reads, in one-letter code: CTP synthase (535 aa).

The segment at 1–267 (MTKYIFVTGG…DQIVCDHLKL (267 aa)) is amidoligase domain. Residue Ser-13 participates in CTP binding. Residue Ser-13 participates in UTP binding. Residue 14–19 (SLGKGI) coordinates ATP. Tyr-54 contacts L-glutamine. Asp-71 lines the ATP pocket. Residues Asp-71 and Glu-141 each contribute to the Mg(2+) site. Residues 148-150 (DIE), 188-193 (KTKPTQ), and Lys-224 each bind CTP. Residues 188–193 (KTKPTQ) and Lys-224 contribute to the UTP site. 240–242 (RDA) is a binding site for ATP. The region spanning 292 to 534 (KIALVGKYVE…VRASITNKES (243 aa)) is the Glutamine amidotransferase type-1 domain. Gly-354 is an L-glutamine binding site. The Nucleophile; for glutamine hydrolysis role is filled by Cys-381. L-glutamine contacts are provided by residues 382 to 385 (LGMQ), Glu-405, and Arg-462. Catalysis depends on residues His-507 and Glu-509.

The protein belongs to the CTP synthase family. Homotetramer.

The enzyme catalyses UTP + L-glutamine + ATP + H2O = CTP + L-glutamate + ADP + phosphate + 2 H(+). It carries out the reaction L-glutamine + H2O = L-glutamate + NH4(+). It catalyses the reaction UTP + NH4(+) + ATP = CTP + ADP + phosphate + 2 H(+). The protein operates within pyrimidine metabolism; CTP biosynthesis via de novo pathway; CTP from UDP: step 2/2. With respect to regulation, allosterically activated by GTP, when glutamine is the substrate; GTP has no effect on the reaction when ammonia is the substrate. The allosteric effector GTP functions by stabilizing the protein conformation that binds the tetrahedral intermediate(s) formed during glutamine hydrolysis. Inhibited by the product CTP, via allosteric rather than competitive inhibition. Functionally, catalyzes the ATP-dependent amination of UTP to CTP with either L-glutamine or ammonia as the source of nitrogen. Regulates intracellular CTP levels through interactions with the four ribonucleotide triphosphates. The sequence is that of CTP synthase from Bacillus cereus (strain AH820).